A 128-amino-acid chain; its full sequence is Azurin (128 aa).

The Plastocyanin-like domain occupies 1-128; sequence AECKTTIDST…SMMKGTVTLK (128 aa). An intrachain disulfide couples Cys3 to Cys26. Cu cation is bound by residues His46, Cys112, His117, and Met121.

It is found in the periplasm. Functionally, transfers electrons from cytochrome c551 to cytochrome oxidase. The protein is Azurin of Pseudomonas fluorescens biotype B.